Consider the following 1003-residue polypeptide: Leucine-rich repeat receptor-like serine/threonine-protein kinase BAM1 (1003 aa).

The signal sequence occupies residues 1–19 (MKLFLLLLFLLHISHTFTA). The Extracellular portion of the chain corresponds to 20–640 (SRPISEFRAL…HSKGPLSASM (621 aa)). LRR repeat units lie at residues 68–92 (RRHVTSLDLSGLNLSGTLSPDVSHL), 93–116 (RLLQNLSLAENLISGPIPPEISSL), 117–140 (SGLRHLNLSNNVFNGSFPDEISSG), 142–165 (VNLRVLDVYNNNLTGDLPVSVTNL), 166–191 (TQLRHLHLGGNYFAGKIPPSYGSWPV), 193–213 (EYLAVSGNELVGKIPPEIGNL), 215–238 (TLRELYIGYYNAFEDGLPPEIGNL), 239–262 (SELVRFDGANCGLTGEIPPEIGKL), 263–285 (QKLDTLFLQVNVFSGPLTWELGT), 286–310 (LSSLKSMDLSNNMFTGEIPASFAEL), 312–334 (NLTLLNLFRNKLHGEIPEFIGDL), 335–358 (PELEVLQLWENNFTGSIPQKLGEN), 359–382 (GKLNLVDLSSNKLTGTLPPNMCSG), 385–406 (LETLITLGNFLFGSIPDSLGKC), 407–430 (ESLTRIRMGENFLNGSIPKGLFGL), 432–454 (KLTQVELQDNYLSGELPVAGGVS), 455–480 (VNLGQISLSNNQLSGPLPPAIGNFTG), 482–502 (QKLLLDGNKFQGPIPSEVGKL), 503–526 (QQLSKIDFSHNLFSGRIAPEISRC), 527–550 (KLLTFVDLSRNELSGEIPNEITAM), 551–574 (KILNYLNLSRNHLVGSIPGSISSM), and 575–598 (QSLTSLDFSYNNLSGLVPGTGQFS). 6 N-linked (GlcNAc...) asparagine glycosylation sites follow: asparagine 80, asparagine 97, asparagine 123, asparagine 130, asparagine 153, and asparagine 164. Residues asparagine 212 and asparagine 237 are each glycosylated (N-linked (GlcNAc...) asparagine). 2 N-linked (GlcNAc...) asparagine glycosylation sites follow: asparagine 312 and asparagine 346. The N-linked (GlcNAc...) asparagine glycan is linked to asparagine 420. N-linked (GlcNAc...) asparagine glycosylation is present at asparagine 477. 3 N-linked (GlcNAc...) asparagine glycosylation sites follow: asparagine 557, asparagine 586, and asparagine 601. The helical transmembrane segment at 641-661 (KLLLVLGLLVCSIAFAVVAII) threads the bilayer. Over 662-1003 (KARSLKKASE…VQSPPDLLNL (342 aa)) the chain is Cytoplasmic. The residue at position 686 (threonine 686) is a Phosphothreonine. The region spanning 694 to 971 (LKEDNIIGKG…VQILTEIPKL (278 aa)) is the Protein kinase domain. ATP is bound by residues 700–708 (IGKGGAGIV) and lysine 722. 2 positions are modified to phosphotyrosine: tyrosine 769 and tyrosine 807. Aspartate 820 (proton acceptor) is an active-site residue. The residue at position 855 (serine 855) is a Phosphoserine. A phosphotyrosine mark is found at tyrosine 863 and tyrosine 870. Phosphothreonine is present on threonine 871. The disordered stretch occupies residues 969 to 1003 (PKLPPSKDQPMTESAPESELSPKSGVQSPPDLLNL). Serine 996 is subject to Phosphoserine.

This sequence belongs to the protein kinase superfamily. Ser/Thr protein kinase family. Self-interacts and interacts with BAM2 and CLV1. Binds to the CLV3, CLE5, CLE11, CLE18, CLE19, CLE22, CLE25, CLE26, CLE40, CLE41 and CLE42 mature peptides, probably via its extracellular leucine-rich repeat region. In terms of tissue distribution, expressed in seedlings, roots, leaves, inflorescences, flowers and siliques.

It is found in the cell membrane. It carries out the reaction L-seryl-[protein] + ATP = O-phospho-L-seryl-[protein] + ADP + H(+). It catalyses the reaction L-threonyl-[protein] + ATP = O-phospho-L-threonyl-[protein] + ADP + H(+). In terms of biological role, necessary for male gametophyte development, as well as ovule specification and function. Involved in cell-cell communication process required during early anther development, and regulating cell division and differentiation to organize cell layers. Required for the development of high-ordered vascular strands within the leaf and a correlated control of leaf shape, size and symmetry. May regulate the CLV1-dependent CLV3-mediated signaling in meristems maintenance. The chain is Leucine-rich repeat receptor-like serine/threonine-protein kinase BAM1 (BAM1) from Arabidopsis thaliana (Mouse-ear cress).